The primary structure comprises 883 residues: Probable valine--tRNA ligase, cytoplasmic (883 aa).

A compositionally biased stretch (basic and acidic residues) spans Met-1–Leu-23. Residues Met-1–Pro-49 form a disordered region. Residues Ser-30–Ser-45 show a composition bias toward low complexity. Positions Pro-82–His-92 match the 'HIGH' region motif. Residues Lys-586–Ser-590 carry the 'KMSKS' region motif. Residue Lys-589 participates in ATP binding.

It belongs to the class-I aminoacyl-tRNA synthetase family.

The protein resides in the cytoplasm. It catalyses the reaction tRNA(Val) + L-valine + ATP = L-valyl-tRNA(Val) + AMP + diphosphate. The sequence is that of Probable valine--tRNA ligase, cytoplasmic from Vairimorpha ceranae (strain BRL01) (Microsporidian parasite).